A 252-amino-acid polypeptide reads, in one-letter code: ATP synthase subunit a (252 aa).

A run of 6 helical transmembrane segments spans residues 29-49, 87-107, 117-137, 146-166, 188-208, and 211-231; these read FTNSALFMVATVVVAAAFLFL, FFPLVFSLFMFVLVANLLGLF, IIVTFGLAILVIGTVIVYGFM, LFVPKGVPLVMMVLVVPIEVI, ITLKVFSGFVVSLSALGAVGV, and SILPLAMAVALTALELLVAFL.

The protein belongs to the ATPase A chain family. F-type ATPases have 2 components, CF(1) - the catalytic core - and CF(0) - the membrane proton channel. CF(1) has five subunits: alpha(3), beta(3), gamma(1), delta(1), epsilon(1). CF(0) has three main subunits: a(1), b(2) and c(9-12). The alpha and beta chains form an alternating ring which encloses part of the gamma chain. CF(1) is attached to CF(0) by a central stalk formed by the gamma and epsilon chains, while a peripheral stalk is formed by the delta and b chains.

Its subcellular location is the cell inner membrane. Functionally, key component of the proton channel; it plays a direct role in the translocation of protons across the membrane. This chain is ATP synthase subunit a, found in Mesorhizobium japonicum (strain LMG 29417 / CECT 9101 / MAFF 303099) (Mesorhizobium loti (strain MAFF 303099)).